A 106-amino-acid polypeptide reads, in one-letter code: Halilectin 3, beta chain (106 aa).

The N-linked (GlcNAc...) asparagine glycan is linked to Asn-65.

In terms of assembly, probable heterotrimer consisting of an alpha chain and two beta chains. The alpha chain can probably have different glycosylation states. Post-translationally, glycosylated.

Functionally, lectin with affinity for N-acetyl-galactosamine, carragenan and glycoprotein porcine stomach mucin (PSM). Has metal-independent hemagglutinating activity towards erythrocytes from rabbit and human. Hemagglutinating activity is not inhibited by D-galactose, D-glucose, D-mannose, D-fucose, methyl-alpha-D-galactopyranoside, methyl-alpha-D-glucopyranoside, N-acetyl-glucosamine, N-acetyl-mannosamine, D-fructose, alpha-D-lactose, beta-D-lactose, D-lactulose, D-sucrose, fucoidan or glycoproteins thyroglobulin and ovalmucoid. This chain is Halilectin 3, beta chain, found in Haliclona caerulea (Blue Caribbean sponge).